We begin with the raw amino-acid sequence, 191 residues long: Phosphoheptose isomerase (191 aa).

An SIS domain is found at 37–191 (ITSSLKQGGK…LILLIEQSLL (155 aa)). 52 to 54 (NGG) contributes to the substrate binding site. Residues His-61 and Glu-65 each contribute to the Zn(2+) site. Residues Glu-65, 93 to 94 (ND), 119 to 121 (STS), Ser-124, and Gln-172 each bind substrate. Gln-172 and His-180 together coordinate Zn(2+).

The protein belongs to the SIS family. GmhA subfamily. The cofactor is Zn(2+).

The protein resides in the cytoplasm. The catalysed reaction is 2 D-sedoheptulose 7-phosphate = D-glycero-alpha-D-manno-heptose 7-phosphate + D-glycero-beta-D-manno-heptose 7-phosphate. Its pathway is carbohydrate biosynthesis; D-glycero-D-manno-heptose 7-phosphate biosynthesis; D-glycero-alpha-D-manno-heptose 7-phosphate and D-glycero-beta-D-manno-heptose 7-phosphate from sedoheptulose 7-phosphate: step 1/1. In terms of biological role, catalyzes the isomerization of sedoheptulose 7-phosphate in D-glycero-D-manno-heptose 7-phosphate. The chain is Phosphoheptose isomerase from Cytophaga hutchinsonii (strain ATCC 33406 / DSM 1761 / CIP 103989 / NBRC 15051 / NCIMB 9469 / D465).